A 591-amino-acid chain; its full sequence is DDB1- and CUL4-associated factor 8 (591 aa).

Positions 1–25 are enriched in polar residues; it reads MSNKRPNTTDGRTDLANGSLSSSPE. The segment at 1–140 is disordered; it reads MSNKRPNTTD…EDWVSSETTA (140 aa). Phosphoserine occurs at positions 22 and 23. A Nuclear export signal motif is present at residues 40–51; sequence IEVEASDLSLSL. Basic and acidic residues-rich tracts occupy residues 66–100 and 118–131; these read RGTDTESSGEEKDSDSMEDTGHYSINDESRGHGHS and SRDQDSSDDERALE. 3 positions are modified to phosphoserine: Ser100, Ser123, and Ser124. WD repeat units lie at residues 185 to 224, 228 to 269, 275 to 315, 323 to 363, 379 to 418, 426 to 466, and 470 to 509; these read GHTGCVNTLHFNQRGTWLASGSDDLKVVVWDWVRRQPVLD, GHKS…CCKN, QHKG…PASK, EKKV…ENEN, ESKANITCLVYSHDGTELLASYNDEDIYLFNSSHSDGAQY, RNNA…IIQF, and DKGGVVNCLEPHPHLPVLATSGLDHDVKIWAPTAEASTEL. At Arg198 the chain carries Omega-N-methylarginine; by PRMT1. Residues 552–591 form a disordered region; that stretch reads HRRWREPGVGATDADSDESPSSSDTSDEEEGPDRVQCMPS.

Belongs to the WD repeat DCAF8 family. As to quaternary structure, interacts with DDB1, CUL4A and CUL4B. Interacts with KPNA1, KPNB1 and XPO1. As to expression, expressed in the brain.

Its subcellular location is the nucleus. It is found in the cytoplasm. It participates in protein modification; protein ubiquitination. May function as a substrate receptor for CUL4-DDB1 E3 ubiquitin-protein ligase complex. This chain is DDB1- and CUL4-associated factor 8 (Dcaf8), found in Mus musculus (Mouse).